A 767-amino-acid polypeptide reads, in one-letter code: Probable beta-glucosidase K (767 aa).

An N-linked (GlcNAc...) asparagine glycan is attached at asparagine 19. Aspartate 232 is an active-site residue. 3 N-linked (GlcNAc...) asparagine glycosylation sites follow: asparagine 324, asparagine 477, and asparagine 749. The 148-residue stretch at 405–552 (EGQPGLRMRF…DPERAIARAV (148 aa)) folds into the PA14 domain. A disordered region spans residues 727–767 (LGRRGRSGSSPAVYRGRSNNVVNRTSHQGAQRISKGGFAAR). Residues 743 to 757 (RSNNVVNRTSHQGAQ) show a composition bias toward polar residues.

The protein belongs to the glycosyl hydrolase 3 family.

It localises to the secreted. The enzyme catalyses Hydrolysis of terminal, non-reducing beta-D-glucosyl residues with release of beta-D-glucose.. Its pathway is glycan metabolism; cellulose degradation. Beta-glucosidases are one of a number of cellulolytic enzymes involved in the degradation of cellulosic biomass. Catalyzes the last step releasing glucose from the inhibitory cellobiose. The protein is Probable beta-glucosidase K (bglK) of Aspergillus fumigatus (strain ATCC MYA-4609 / CBS 101355 / FGSC A1100 / Af293) (Neosartorya fumigata).